A 99-amino-acid polypeptide reads, in one-letter code: Nucleoid-associated protein SPN23F10240 (99 aa).

It belongs to the YbaB/EbfC family. In terms of assembly, homodimer.

The protein localises to the cytoplasm. It is found in the nucleoid. In terms of biological role, binds to DNA and alters its conformation. May be involved in regulation of gene expression, nucleoid organization and DNA protection. This chain is Nucleoid-associated protein SPN23F10240, found in Streptococcus pneumoniae (strain ATCC 700669 / Spain 23F-1).